Consider the following 363-residue polypeptide: HAUS augmin-like complex subunit 4 (363 aa).

Belongs to the HAUS4 family. As to quaternary structure, component of the HAUS augmin-like complex. The complex interacts with the gamma-tubulin ring complex and this interaction is required for spindle assembly. Interacts with EML3 (phosphorylated at 'Thr-881').

The protein localises to the cytoplasm. It is found in the cytoskeleton. It localises to the microtubule organizing center. Its subcellular location is the centrosome. The protein resides in the spindle. Contributes to mitotic spindle assembly, maintenance of centrosome integrity and completion of cytokinesis as part of the HAUS augmin-like complex. This chain is HAUS augmin-like complex subunit 4 (HAUS4), found in Homo sapiens (Human).